The following is a 588-amino-acid chain: L-fucose isomerase (588 aa).

Active-site proton acceptor residues include Glu335 and Asp359. The Mn(2+) site is built by Glu335, Asp359, and His525.

Belongs to the L-fucose isomerase family. Mn(2+) serves as cofactor.

The protein resides in the cytoplasm. The enzyme catalyses L-fucose = L-fuculose. It functions in the pathway carbohydrate degradation; L-fucose degradation; L-lactaldehyde and glycerone phosphate from L-fucose: step 1/3. Functionally, converts the aldose L-fucose into the corresponding ketose L-fuculose. This Streptococcus pneumoniae (strain ATCC 700669 / Spain 23F-1) protein is L-fucose isomerase.